The chain runs to 276 residues: Type II pantothenate kinase (276 aa).

ATP is bound at residue 8–15 (DAGGTLTK). Glu-76 acts as the Proton acceptor in catalysis. Residues Thr-105, 127–131 (GGTIM), Phe-143, and Ser-230 contribute to the ATP site.

This sequence belongs to the type II pantothenate kinase family. In terms of assembly, homodimer.

It localises to the cytoplasm. It carries out the reaction (R)-pantothenate + ATP = (R)-4'-phosphopantothenate + ADP + H(+). It functions in the pathway cofactor biosynthesis; coenzyme A biosynthesis; CoA from (R)-pantothenate: step 1/5. Catalyzes the phosphorylation of pantothenate (Pan), the first step in CoA biosynthesis. This is Type II pantothenate kinase from Bacillus cereus (strain AH820).